The chain runs to 709 residues: Elongation factor G (709 aa).

One can recognise a tr-type G domain in the interval 8–297 (ANTRNIGIMA…AVIDYLPSPL (290 aa)). GTP contacts are provided by residues 17-24 (AHVDAGKT), 81-85 (DTPGH), and 135-138 (NKMD).

It belongs to the TRAFAC class translation factor GTPase superfamily. Classic translation factor GTPase family. EF-G/EF-2 subfamily.

The protein localises to the cytoplasm. Catalyzes the GTP-dependent ribosomal translocation step during translation elongation. During this step, the ribosome changes from the pre-translocational (PRE) to the post-translocational (POST) state as the newly formed A-site-bound peptidyl-tRNA and P-site-bound deacylated tRNA move to the P and E sites, respectively. Catalyzes the coordinated movement of the two tRNA molecules, the mRNA and conformational changes in the ribosome. The sequence is that of Elongation factor G from Lactococcus lactis subsp. cremoris (strain MG1363).